The following is a 360-amino-acid chain: Spore germination protein GerQB (360 aa).

10 helical membrane passes run 11–31 (SPYM…MLGF), 45–65 (ISTL…YQIL), 84–104 (IGGL…ATTL), 116–136 (FPSI…YYIV), 142–162 (VVAG…FTFF), 188–208 (MKGN…YPFI), 220–240 (YANL…LAFF), 270–290 (IIVS…LWGV), 300–320 (IKQK…SFFL), and 331–351 (TWTG…LWLI).

It belongs to the amino acid-polyamine-organocation (APC) superfamily. Spore germination protein (SGP) (TC 2.A.3.9) family.

The protein resides in the membrane. Its function is as follows. Required for the germination response to inosine. Has no role in L-alanine germination. The sequence is that of Spore germination protein GerQB (gerQB) from Bacillus cereus.